Reading from the N-terminus, the 75-residue chain is Penaeidin-3k (75 aa).

The first 19 residues, 1 to 19, serve as a signal peptide directing secretion; the sequence is MRLVVCLVFLASFALVCQG. Gln-20 is subject to Pyrrolidone carboxylic acid. 3 disulfide bridges follow: Cys-44–Cys-59, Cys-48–Cys-66, and Cys-60–Cys-67. At Ser-74 the chain carries Serine amide.

This sequence belongs to the penaeidin family.

It localises to the cytoplasmic granule. In terms of biological role, antibacterial and antifungal activity. Presents chitin-binding activity. This is Penaeidin-3k from Penaeus setiferus (Atlantic white shrimp).